We begin with the raw amino-acid sequence, 419 residues long: Probable 3-isopropylmalate dehydratase large subunit (419 aa).

Positions 299, 359, and 362 each coordinate [4Fe-4S] cluster.

The protein belongs to the aconitase/IPM isomerase family. LeuC type 2 subfamily. In terms of assembly, heterodimer of LeuC and LeuD. Requires [4Fe-4S] cluster as cofactor.

It carries out the reaction (2R,3S)-3-isopropylmalate = (2S)-2-isopropylmalate. The protein operates within amino-acid biosynthesis; L-leucine biosynthesis; L-leucine from 3-methyl-2-oxobutanoate: step 2/4. Its function is as follows. Catalyzes the isomerization between 2-isopropylmalate and 3-isopropylmalate, via the formation of 2-isopropylmaleate. The chain is Probable 3-isopropylmalate dehydratase large subunit from Methanothermobacter thermautotrophicus (strain ATCC 29096 / DSM 1053 / JCM 10044 / NBRC 100330 / Delta H) (Methanobacterium thermoautotrophicum).